The sequence spans 102 residues: NADH-quinone oxidoreductase subunit K (102 aa).

The next 3 helical transmembrane spans lie at 6 to 26, 31 to 51, and 62 to 82; these read ATHF…GVLT, LVIF…LIGF, and VFAL…LGIV.

Belongs to the complex I subunit 4L family. In terms of assembly, NDH-1 is composed of 14 different subunits. Subunits NuoA, H, J, K, L, M, N constitute the membrane sector of the complex.

The protein localises to the cell membrane. The enzyme catalyses a quinone + NADH + 5 H(+)(in) = a quinol + NAD(+) + 4 H(+)(out). Functionally, NDH-1 shuttles electrons from NADH, via FMN and iron-sulfur (Fe-S) centers, to quinones in the respiratory chain. The immediate electron acceptor for the enzyme in this species is believed to be ubiquinone. Couples the redox reaction to proton translocation (for every two electrons transferred, four hydrogen ions are translocated across the cytoplasmic membrane), and thus conserves the redox energy in a proton gradient. This is NADH-quinone oxidoreductase subunit K from Thermomicrobium roseum (strain ATCC 27502 / DSM 5159 / P-2).